Here is a 371-residue protein sequence, read N- to C-terminus: Probable endolytic peptidoglycan transglycosylase RlpA (371 aa).

The first 25 residues, 1–25 (MNQRHLWTIVALSVTVLGTPAVGRT), serve as a signal peptide directing secretion. A compositionally biased stretch (low complexity) spans 177 to 191 (LVASQSQNKSSSSQQ). Positions 177–196 (LVASQSQNKSSSSQQKSERY) are disordered.

This sequence belongs to the RlpA family.

Its function is as follows. Lytic transglycosylase with a strong preference for naked glycan strands that lack stem peptides. The sequence is that of Probable endolytic peptidoglycan transglycosylase RlpA from Nostoc sp. (strain PCC 7120 / SAG 25.82 / UTEX 2576).